A 694-amino-acid chain; its full sequence is Polyribonucleotide nucleotidyltransferase (694 aa).

Mg(2+) contacts are provided by aspartate 485 and aspartate 491. The region spanning proline 552–isoleucine 611 is the KH domain. In terms of domain architecture, S1 motif spans glycine 621–lysine 689.

It belongs to the polyribonucleotide nucleotidyltransferase family. Mg(2+) is required as a cofactor.

It is found in the cytoplasm. The catalysed reaction is RNA(n+1) + phosphate = RNA(n) + a ribonucleoside 5'-diphosphate. Functionally, involved in mRNA degradation. Catalyzes the phosphorolysis of single-stranded polyribonucleotides processively in the 3'- to 5'-direction. The sequence is that of Polyribonucleotide nucleotidyltransferase from Chlamydia caviae (strain ATCC VR-813 / DSM 19441 / 03DC25 / GPIC) (Chlamydophila caviae).